We begin with the raw amino-acid sequence, 113 residues long: Large ribosomal subunit protein bL19 (113 aa).

This sequence belongs to the bacterial ribosomal protein bL19 family.

Functionally, this protein is located at the 30S-50S ribosomal subunit interface and may play a role in the structure and function of the aminoacyl-tRNA binding site. This Mycolicibacterium vanbaalenii (strain DSM 7251 / JCM 13017 / BCRC 16820 / KCTC 9966 / NRRL B-24157 / PYR-1) (Mycobacterium vanbaalenii) protein is Large ribosomal subunit protein bL19.